Reading from the N-terminus, the 177-residue chain is MGFLTTIVACFITFAILIHSSKAQNSPQDYLNPHNAARRQVGVGPMTWDNRLAAYAQNYANQRIGDCGMIHSHGPYGENLAAAFPQLNAAGAVKMWVDEKRFYDYNSNSCVGGVCGHYTQVVWRNSVRLGCARVRSNNGWFFITCNYDPPGNFIGQRPFGDLEEQPFDSKLELPTDV.

A signal peptide spans 1–23 (MGFLTTIVACFITFAILIHSSKA). The residue at position 24 (Gln-24) is a Pyrrolidone carboxylic acid. Positions 31 to 147 (LNPHNAARRQ…NGWFFITCNY (117 aa)) constitute an SCP domain.

It belongs to the CRISP family. Two disulfide bonds are present.

Probably involved in the defense reaction of plants against pathogens. The protein is Basic form of pathogenesis-related protein 1 of Nicotiana tabacum (Common tobacco).